A 337-amino-acid chain; its full sequence is Glyceraldehyde-3-phosphate dehydrogenase 2 (337 aa).

NADP(+) is bound by residues 11-12, D35, R80, and T122; that span reads RI. Residues 153-155, T184, R199, 212-213, and R235 each bind D-glyceraldehyde 3-phosphate; these read SCT and TG. Catalysis depends on C154, which acts as the Nucleophile. N317 contributes to the NADP(+) binding site.

Belongs to the glyceraldehyde-3-phosphate dehydrogenase family. Homotetramer.

It localises to the cytoplasm. The catalysed reaction is D-glyceraldehyde 3-phosphate + phosphate + NADP(+) = (2R)-3-phospho-glyceroyl phosphate + NADPH + H(+). The enzyme catalyses D-glyceraldehyde 3-phosphate + phosphate + NAD(+) = (2R)-3-phospho-glyceroyl phosphate + NADH + H(+). The protein operates within carbohydrate biosynthesis; Calvin cycle. Functionally, gap2 has a major role in carbon fixation as a component of the Calvin cycle. Catalyzes the oxidative phosphorylation of glyceraldehyde 3-phosphate (G3P) to 1,3-bisphosphoglycerate (BPG) using the cofactor NAD. The first reaction step involves the formation of a hemiacetal intermediate between G3P and a cysteine residue, and this hemiacetal intermediate is then oxidized to a thioester, with concomitant reduction of NAD to NADH. The reduced NADH is then exchanged with the second NAD, and the thioester is attacked by a nucleophilic inorganic phosphate to produce BPG. The sequence is that of Glyceraldehyde-3-phosphate dehydrogenase 2 (gap2) from Trichormus variabilis (strain ATCC 29413 / PCC 7937) (Anabaena variabilis).